A 330-amino-acid chain; its full sequence is Ribosomal RNA small subunit methyltransferase H (330 aa).

S-adenosyl-L-methionine-binding positions include 50–52, aspartate 69, leucine 103, aspartate 117, and glutamine 124; that span reads GGH.

This sequence belongs to the methyltransferase superfamily. RsmH family.

The protein resides in the cytoplasm. It carries out the reaction cytidine(1402) in 16S rRNA + S-adenosyl-L-methionine = N(4)-methylcytidine(1402) in 16S rRNA + S-adenosyl-L-homocysteine + H(+). Functionally, specifically methylates the N4 position of cytidine in position 1402 (C1402) of 16S rRNA. This chain is Ribosomal RNA small subunit methyltransferase H, found in Saccharopolyspora erythraea (strain ATCC 11635 / DSM 40517 / JCM 4748 / NBRC 13426 / NCIMB 8594 / NRRL 2338).